The following is a 269-amino-acid chain: Staphylococcal secretory antigen ssaA2 (269 aa).

Positions 1 to 27 (MKKIATATIATAGFATIAIASGNQAHA) are cleaved as a signal peptide. Tandem repeats lie at residues 83-85 (YNN), 88-90 (YNN), 91-93 (YNN), 97-99 (YNN), 103-105 (YNN), 106-108 (YSN), and 115-117 (YNN). A 7 X 3 AA repeats of Y-[NS]-N region spans residues 83–115 (YNNYNYNNYNNGYSYNNYSRYNNYSNNNQSYNY). The Peptidase C51 domain maps to 148 to 269 (MAPSSNGRSI…SQAAGYNFIH (122 aa)).

It is found in the secreted. Functionally, not known; immunogenic protein. The polypeptide is Staphylococcal secretory antigen ssaA2 (ssaA2) (Staphylococcus aureus (strain MSSA476)).